Reading from the N-terminus, the 139-residue chain is AP-4 complex subunit sigma (139 aa).

Belongs to the adaptor complexes small subunit family. In terms of assembly, may be part of the adaptor protein complex 4 (AP-4), a heterotetramer composed of two large adaptins (epsilon-type subunitand beta-type subunit), a medium adaptin (mu-type subunit) and a small adaptin (sigma-type).

It is found in the golgi apparatus. Its subcellular location is the trans-Golgi network membrane. In terms of biological role, probable component of an adaptor protein complex. Adaptor protein complexes are vesicle coat components involved both in vesicle formation and cargo selection. They control the vesicular transport of proteins in different trafficking pathways. The protein is AP-4 complex subunit sigma of Dictyostelium discoideum (Social amoeba).